Here is a 541-residue protein sequence, read N- to C-terminus: Membrane protein insertase YidC (541 aa).

The helical transmembrane segment at 7 to 27 threads the bilayer; that stretch reads ILLLALALVSFLLFQQWQVET. Positions 34 to 55 are enriched in polar residues; that stretch reads TVSTVQQTHKNGDVPTSSTANS. The interval 34-59 is disordered; the sequence is TVSTVQQTHKNGDVPTSSTANSDAPV. 4 consecutive transmembrane segments (helical) span residues 343–363, 418–438, 456–476, and 495–515; these read SFIQ…TFIV, LGGC…YWAL, LSAQ…MFLI, and FIPV…VLYW.

This sequence belongs to the OXA1/ALB3/YidC family. Type 1 subfamily. As to quaternary structure, interacts with the Sec translocase complex via SecD. Specifically interacts with transmembrane segments of nascent integral membrane proteins during membrane integration.

The protein resides in the cell inner membrane. Functionally, required for the insertion and/or proper folding and/or complex formation of integral membrane proteins into the membrane. Involved in integration of membrane proteins that insert both dependently and independently of the Sec translocase complex, as well as at least some lipoproteins. Aids folding of multispanning membrane proteins. In Aliivibrio salmonicida (strain LFI1238) (Vibrio salmonicida (strain LFI1238)), this protein is Membrane protein insertase YidC.